A 59-amino-acid polypeptide reads, in one-letter code: Large ribosomal subunit protein uL30 (59 aa).

It belongs to the universal ribosomal protein uL30 family. In terms of assembly, part of the 50S ribosomal subunit.

The chain is Large ribosomal subunit protein uL30 from Geobacter sulfurreducens (strain ATCC 51573 / DSM 12127 / PCA).